The following is a 97-amino-acid chain: MAHKKGVGSSRNGRDSNPKYRGIKKYGGEFVTAGNIILRQCGTKWHPGSNVGMGTDYTIYSLVDGVVQFAHKSKKAYKVNVVPVEYVEVEIEEVVEA.

The interval 1–21 is disordered; the sequence is MAHKKGVGSSRNGRDSNPKYR.

It belongs to the bacterial ribosomal protein bL27 family.

This Gemmatimonas aurantiaca (strain DSM 14586 / JCM 11422 / NBRC 100505 / T-27) protein is Large ribosomal subunit protein bL27.